Consider the following 257-residue polypeptide: Ribosomal RNA small subunit methyltransferase J (257 aa).

Residues 107 to 108, 123 to 124, and Asp177 each bind S-adenosyl-L-methionine; these read RD and ER.

It belongs to the methyltransferase superfamily. RsmJ family.

Its subcellular location is the cytoplasm. It carries out the reaction guanosine(1516) in 16S rRNA + S-adenosyl-L-methionine = N(2)-methylguanosine(1516) in 16S rRNA + S-adenosyl-L-homocysteine + H(+). Functionally, specifically methylates the guanosine in position 1516 of 16S rRNA. The polypeptide is Ribosomal RNA small subunit methyltransferase J (Haemophilus influenzae (strain PittEE)).